Consider the following 77-residue polypeptide: Small ribosomal subunit protein bS16c (77 aa).

This sequence belongs to the bacterial ribosomal protein bS16 family.

It localises to the plastid. It is found in the chloroplast. The sequence is that of Small ribosomal subunit protein bS16c from Eucalyptus globulus subsp. globulus (Tasmanian blue gum).